Consider the following 126-residue polypeptide: Type II methyltransferase M.HgiGI (126 aa).

The 126-residue stretch at 1 to 126 (MKTIDLFAGC…ARLSKIHQQA (126 aa)) folds into the SAM-dependent MTase C5-type domain. Cysteine 75 is an active-site residue.

The protein belongs to the class I-like SAM-binding methyltransferase superfamily. C5-methyltransferase family.

The enzyme catalyses a 2'-deoxycytidine in DNA + S-adenosyl-L-methionine = a 5-methyl-2'-deoxycytidine in DNA + S-adenosyl-L-homocysteine + H(+). In terms of biological role, a methylase, recognizes the double-stranded sequence 5'-GRCGYC-3', methylates C-? on both strands, and protects the DNA from cleavage by the HgiEI endonuclease. This is Type II methyltransferase M.HgiGI from Herpetosiphon aurantiacus (Herpetosiphon giganteus).